We begin with the raw amino-acid sequence, 218 residues long: Large ribosomal subunit protein uL3 (218 aa).

The protein belongs to the universal ribosomal protein uL3 family. Part of the 50S ribosomal subunit. Forms a cluster with proteins L14 and L19.

In terms of biological role, one of the primary rRNA binding proteins, it binds directly near the 3'-end of the 23S rRNA, where it nucleates assembly of the 50S subunit. The chain is Large ribosomal subunit protein uL3 from Corynebacterium aurimucosum (strain ATCC 700975 / DSM 44827 / CIP 107346 / CN-1) (Corynebacterium nigricans).